A 424-amino-acid polypeptide reads, in one-letter code: D-inositol 3-phosphate glycosyltransferase (424 aa).

Position 21 (H21) interacts with 1D-myo-inositol 3-phosphate. Residues 27 to 28 (QP) and G35 contribute to the UDP-N-acetyl-alpha-D-glucosamine site. Residues 32-37 (DAGGMN), K90, Y123, T147, and R167 each bind 1D-myo-inositol 3-phosphate. UDP-N-acetyl-alpha-D-glucosamine-binding residues include R241, K246, and Q299. Residues F308, Q309, and A311 each coordinate Mg(2+). Residues E321 and E329 each coordinate UDP-N-acetyl-alpha-D-glucosamine. T335 serves as a coordination point for Mg(2+).

It belongs to the glycosyltransferase group 1 family. MshA subfamily. Homodimer.

The enzyme catalyses 1D-myo-inositol 3-phosphate + UDP-N-acetyl-alpha-D-glucosamine = 1D-myo-inositol 2-acetamido-2-deoxy-alpha-D-glucopyranoside 3-phosphate + UDP + H(+). Its function is as follows. Catalyzes the transfer of a N-acetyl-glucosamine moiety to 1D-myo-inositol 3-phosphate to produce 1D-myo-inositol 2-acetamido-2-deoxy-glucopyranoside 3-phosphate in the mycothiol biosynthesis pathway. The protein is D-inositol 3-phosphate glycosyltransferase of Mycobacterium avium (strain 104).